The chain runs to 110 residues: Methionine-R-sulfoxide reductase B1-A (110 aa).

In terms of domain architecture, MsrB spans 1 to 104; sequence MSFCSFSGGE…FSSSLKFIPK (104 aa). Positions 23, 26, 69, and 72 each coordinate Zn(2+). Selenocysteine 93 serves as the catalytic Nucleophile. Residue selenocysteine 93 is a non-standard amino acid, selenocysteine.

Belongs to the MsrB Met sulfoxide reductase family. Zn(2+) serves as cofactor. In terms of tissue distribution, in the embryo, expressed in the polster, paraxial mesoderm, tectum, otic vesicle and liver.

Its subcellular location is the cytoplasm. The protein resides in the nucleus. It is found in the cytoskeleton. It catalyses the reaction L-methionyl-[protein] + [thioredoxin]-disulfide + H2O = L-methionyl-(R)-S-oxide-[protein] + [thioredoxin]-dithiol. The enzyme catalyses [thioredoxin]-disulfide + L-methionine + H2O = L-methionine (R)-S-oxide + [thioredoxin]-dithiol. Its function is as follows. Methionine-sulfoxide reductase that specifically reduces methionine (R)-sulfoxide back to methionine. While in many cases, methionine oxidation is the result of random oxidation following oxidative stress, methionine oxidation is also a post-translational modification that takes place on specific residue. Acts as a regulator of actin assembly by reducing methionine (R)-sulfoxide mediated by MICALs (mical1, mical2 or mical3) on actin, thereby promoting filament repolymerization. Plays a role in innate immunity by reducing oxidized actin, leading to actin repolymerization in macrophages. The sequence is that of Methionine-R-sulfoxide reductase B1-A (msrb1) from Danio rerio (Zebrafish).